A 305-amino-acid chain; its full sequence is Superkiller complex protein 8 (305 aa).

7 WD repeats span residues 14-57 (AHED…LEMQ), 62-101 (GHQLGVVSVDVSPSGNIMASSSLDAHIRLWDLESGKQIRS), 104-143 (AGPVDAWSVAFSPDSQHLATGSHVGKVNIFGVETGKKEYS), 146-187 (TRGK…HTLE), 188-227 (GHAMPIRSLTFSTDSQLLVTASDDGYIKIYDVQHASLAAT), 230-269 (GHGSWVLNVAFSPDDAHFVSSSSDKSVKVWDVSARTCVHT), and 272-305 (DHQDQVWGVKYNRNGSKIVSVGDDQEIHVYDCPI).

It belongs to the SKI8 family. Component of the PAF1 complex. Component of the SKI complex.

Its subcellular location is the nucleus. The protein localises to the cytoplasm. Its function is as follows. Component of the PAF1 complex (PAF1C) which has multiple functions during transcription by RNA polymerase II and is implicated in regulation of development and maintenance of embryonic stem cell pluripotency. PAF1C associates with RNA polymerase II through interaction with POLR2A CTD non-phosphorylated and 'Ser-2'- and 'Ser-5'-phosphorylated forms and is involved in transcriptional elongation, acting both independently and synergistically with TCEA1 and in cooperation with the DSIF complex and HTATSF1. Also acts as a component of the SKI complex, a multiprotein complex that assists the RNA-degrading exosome during the mRNA decay and quality-control pathways. The SKI complex catalyzes mRNA extraction from 80S ribosomal complexes in the 3'-5' direction and channels mRNA to the cytosolic exosome for degradation. This chain is Superkiller complex protein 8 (skic8), found in Xenopus laevis (African clawed frog).